The following is a 185-amino-acid chain: Elongation factor P (185 aa).

Belongs to the elongation factor P family.

The protein localises to the cytoplasm. Its pathway is protein biosynthesis; polypeptide chain elongation. Its function is as follows. Involved in peptide bond synthesis. Stimulates efficient translation and peptide-bond synthesis on native or reconstituted 70S ribosomes in vitro. Probably functions indirectly by altering the affinity of the ribosome for aminoacyl-tRNA, thus increasing their reactivity as acceptors for peptidyl transferase. The protein is Elongation factor P of Streptococcus pyogenes serotype M5 (strain Manfredo).